The chain runs to 188 residues: Potassium-transporting ATPase KdpC subunit (188 aa).

Residues 13 to 33 (MTAIFWIGCGLAYPLIFTGFA) form a helical membrane-spanning segment.

The protein belongs to the KdpC family. In terms of assembly, the system is composed of three essential subunits: KdpA, KdpB and KdpC.

It is found in the cell inner membrane. Part of the high-affinity ATP-driven potassium transport (or Kdp) system, which catalyzes the hydrolysis of ATP coupled with the electrogenic transport of potassium into the cytoplasm. This subunit acts as a catalytic chaperone that increases the ATP-binding affinity of the ATP-hydrolyzing subunit KdpB by the formation of a transient KdpB/KdpC/ATP ternary complex. The polypeptide is Potassium-transporting ATPase KdpC subunit (Gloeobacter violaceus (strain ATCC 29082 / PCC 7421)).